Here is a 61-residue protein sequence, read N- to C-terminus: Double gene block protein 2 (61 aa).

Topologically, residues 1–12 (MACCRCDSSPGD) are cytoplasmic. The chain crosses the membrane as a helical; Signal-anchor for type II membrane protein span at residues 13 to 33 (YSGALLILFISFVFFYITSLS). Topologically, residues 34 to 61 (PQGNTYVHHFDSSSVKTQYVGISTNGDG) are lumenal.

It belongs to the gammacarmovirus double gene block protein 2 family.

The protein localises to the host endoplasmic reticulum membrane. Cell-to-cell movement function. This is Double gene block protein 2 from Melon necrotic spot virus (MNSV).